A 338-amino-acid polypeptide reads, in one-letter code: NADPH dehydrogenase (338 aa).

FMN is bound at residue 23–26 (SPMC). Tyrosine 28 is a binding site for substrate. FMN-binding residues include alanine 60 and glutamine 102. 163–166 (HGAH) is a substrate binding site. FMN is bound by residues arginine 214 and 306 to 307 (AR).

It belongs to the NADH:flavin oxidoreductase/NADH oxidase family. NamA subfamily. In terms of assembly, homotetramer. FMN serves as cofactor.

It catalyses the reaction A + NADPH + H(+) = AH2 + NADP(+). Catalyzes the reduction of the double bond of an array of alpha,beta-unsaturated aldehydes and ketones. It also reduces the nitro group of nitroester and nitroaromatic compounds. It could have a role in detoxification processes. In Halalkalibacterium halodurans (strain ATCC BAA-125 / DSM 18197 / FERM 7344 / JCM 9153 / C-125) (Bacillus halodurans), this protein is NADPH dehydrogenase.